Here is an 85-residue protein sequence, read N- to C-terminus: Large ribosomal subunit protein bL31B (85 aa).

It belongs to the bacterial ribosomal protein bL31 family. Type B subfamily. In terms of assembly, part of the 50S ribosomal subunit.

The protein is Large ribosomal subunit protein bL31B of Staphylococcus epidermidis (strain ATCC 35984 / DSM 28319 / BCRC 17069 / CCUG 31568 / BM 3577 / RP62A).